Reading from the N-terminus, the 135-residue chain is Small ribosomal subunit protein uS11 (135 aa).

It belongs to the universal ribosomal protein uS11 family. In terms of assembly, part of the 30S ribosomal subunit. Interacts with proteins S7 and S18. Binds to IF-3.

Its function is as follows. Located on the platform of the 30S subunit, it bridges several disparate RNA helices of the 16S rRNA. Forms part of the Shine-Dalgarno cleft in the 70S ribosome. The chain is Small ribosomal subunit protein uS11 from Corynebacterium urealyticum (strain ATCC 43042 / DSM 7109).